Here is a 133-residue protein sequence, read N- to C-terminus: Probable non-specific lipid-transfer protein 2 (133 aa).

The N-terminal stretch at 1 to 31 (MRTVSMAALVVIAAALAWTSSAEPAPAPAPG) is a signal peptide. 4 disulfide bridges follow: cysteine 35–cysteine 83, cysteine 45–cysteine 60, cysteine 61–cysteine 106, and cysteine 81–cysteine 121.

Belongs to the plant LTP family.

In terms of biological role, plant non-specific lipid-transfer proteins transfer phospholipids as well as galactolipids across membranes. May play a role in wax or cutin deposition in the cell walls of expanding epidermal cells and certain secretory tissues. In Parietaria judaica (Pellitory-of-the-wall), this protein is Probable non-specific lipid-transfer protein 2.